The primary structure comprises 109 residues: Nucleoid-associated protein BCB4264_A0025 (109 aa).

Belongs to the YbaB/EbfC family. In terms of assembly, homodimer.

Its subcellular location is the cytoplasm. The protein resides in the nucleoid. Binds to DNA and alters its conformation. May be involved in regulation of gene expression, nucleoid organization and DNA protection. This Bacillus cereus (strain B4264) protein is Nucleoid-associated protein BCB4264_A0025.